Consider the following 313-residue polypeptide: HPr kinase/phosphorylase (313 aa).

Residues H140 and K161 contribute to the active site. 155–162 contributes to the ATP binding site; the sequence is GNSGAGKS. S162 provides a ligand contact to Mg(2+). Residue D179 is the Proton acceptor; for phosphorylation activity. Proton donor; for dephosphorylation activity of the active site. Positions 203–212 are important for the catalytic mechanism of both phosphorylation and dephosphorylation; that stretch reads IEVRGLGILN. Residue E204 participates in Mg(2+) binding. R246 is a catalytic residue. The tract at residues 267–272 is important for the catalytic mechanism of dephosphorylation; sequence PVAAGR.

It belongs to the HPrK/P family. As to quaternary structure, homohexamer. Mg(2+) serves as cofactor.

It catalyses the reaction [HPr protein]-L-serine + ATP = [HPr protein]-O-phospho-L-serine + ADP + H(+). It carries out the reaction [HPr protein]-O-phospho-L-serine + phosphate + H(+) = [HPr protein]-L-serine + diphosphate. Catalyzes the ATP- as well as the pyrophosphate-dependent phosphorylation of a specific serine residue in HPr, a phosphocarrier protein of the phosphoenolpyruvate-dependent sugar phosphotransferase system (PTS). HprK/P also catalyzes the pyrophosphate-producing, inorganic phosphate-dependent dephosphorylation (phosphorolysis) of seryl-phosphorylated HPr (P-Ser-HPr). The sequence is that of HPr kinase/phosphorylase from Aromatoleum aromaticum (strain DSM 19018 / LMG 30748 / EbN1) (Azoarcus sp. (strain EbN1)).